The chain runs to 314 residues: Porphobilinogen deaminase (314 aa).

An S-(dipyrrolylmethanemethyl)cysteine modification is found at Cys-249.

This sequence belongs to the HMBS family. As to quaternary structure, monomer. Dipyrromethane serves as cofactor.

It catalyses the reaction 4 porphobilinogen + H2O = hydroxymethylbilane + 4 NH4(+). The protein operates within porphyrin-containing compound metabolism; protoporphyrin-IX biosynthesis; coproporphyrinogen-III from 5-aminolevulinate: step 2/4. Its function is as follows. Tetrapolymerization of the monopyrrole PBG into the hydroxymethylbilane pre-uroporphyrinogen in several discrete steps. This Brucella anthropi (strain ATCC 49188 / DSM 6882 / CCUG 24695 / JCM 21032 / LMG 3331 / NBRC 15819 / NCTC 12168 / Alc 37) (Ochrobactrum anthropi) protein is Porphobilinogen deaminase.